We begin with the raw amino-acid sequence, 133 residues long: Small ribosomal subunit protein uS8 (133 aa).

Belongs to the universal ribosomal protein uS8 family. Part of the 30S ribosomal subunit.

One of the primary rRNA binding proteins, it binds directly to 16S rRNA central domain where it helps coordinate assembly of the platform of the 30S subunit. In Staphylothermus marinus (strain ATCC 43588 / DSM 3639 / JCM 9404 / F1), this protein is Small ribosomal subunit protein uS8.